The primary structure comprises 763 residues: Amine oxidase [copper-containing] 3 (763 aa).

Topologically, residues 2–6 are cytoplasmic; it reads TQKTT. Residues 7 to 27 traverse the membrane as a helical; Signal-anchor for type II membrane protein segment; sequence LVLLALAVITIFALVCVLLAG. Topologically, residues 28 to 763 are extracellular; sequence RSGDGGRLSQ…AFSHGGFTYK (736 aa). An N-linked (GlcNAc...) asparagine glycan is attached at Asn-137. Cysteines 198 and 199 form a disulfide. Residues Asn-232 and Asn-294 are each glycosylated (N-linked (GlcNAc...) asparagine). Residue Asp-386 is the Proton acceptor of the active site. Cys-404 and Cys-430 form a disulfide bridge. The Schiff-base intermediate with substrate; via topaquinone role is filled by Tyr-471. Tyr-471 bears the 2',4',5'-topaquinone mark. Cu(2+) contacts are provided by His-520 and His-522. Residues Asp-529, Leu-530, Asp-531, and Glu-572 each coordinate Ca(2+). N-linked (GlcNAc...) asparagine glycans are attached at residues Asn-581 and Asn-592. The Ca(2+) site is built by Glu-641 and Phe-663. N-linked (GlcNAc...) asparagine glycosylation is present at Asn-666. Residues Glu-667, Asp-673, and Leu-674 each coordinate Ca(2+). His-684 contacts Cu(2+). A disulfide bond links Cys-734 and Cys-741.

The protein belongs to the copper/topaquinone oxidase family. As to quaternary structure, homodimer; disulfide-linked. Probably forms heterodimers with AOC2. The cofactor is Cu(2+). Ca(2+) is required as a cofactor. It depends on L-topaquinone as a cofactor. Post-translationally, topaquinone (TPQ) is generated by copper-dependent autoxidation of a specific tyrosyl residue. In terms of processing, N- and O-glycosylated. As to expression, highly expressed in adipocytes, aorta and lung. Expressed at lower levels in heart, kidney, large intestine, liver, small intestine and stomach.

The protein resides in the cell membrane. The catalysed reaction is methylamine + O2 + H2O = formaldehyde + H2O2 + NH4(+). It catalyses the reaction benzylamine + O2 + H2O = benzaldehyde + H2O2 + NH4(+). It carries out the reaction 2-phenylethylamine + O2 + H2O = 2-phenylacetaldehyde + H2O2 + NH4(+). Functionally, catalyzes the oxidative deamination of primary amines to the corresponding aldehydes with the concomitant production of hydrogen peroxide and ammonia. Has a preference for the primary monoamines methylamine and benzylamine. Could also act on 2-phenylethylamine but much less efficiently. At endothelial cells surface can also function as a cell adhesion protein that participates in lymphocyte extravasation and recirculation by mediating the binding of lymphocytes to peripheral lymph node vascular endothelial cells in an L-selectin-independent fashion. The polypeptide is Amine oxidase [copper-containing] 3 (Rattus norvegicus (Rat)).